We begin with the raw amino-acid sequence, 594 residues long: Gamma-terpinene synthase, chloroplastic (594 aa).

Residues 1-44 (MATLSMQVSILSKEVKNVNNIGMRASKPMVARRVSTTRLRPICS) constitute a chloroplast transit peptide. Mn(2+)-binding residues include Asp-347 and Asp-351. The short motif at 347 to 351 (DDVYD) is the DDXXD motif element. Homodimerization stretches follow at residues 353–359 (YGTLDEL) and 425–462 (EAKW…FTLP). Positions 491 and 499 each coordinate Mn(2+).

Belongs to the terpene synthase family. In terms of assembly, homodimer. Requires Mn(2+) as cofactor. It depends on Mg(2+) as a cofactor. As to expression, expressed in peltate glandular trichomes.

The protein resides in the plastid. It localises to the chloroplast. It catalyses the reaction (2E)-geranyl diphosphate = gamma-terpinene + diphosphate. The enzyme catalyses (2E)-geranyl diphosphate = alpha-terpinene + diphosphate. It functions in the pathway secondary metabolite biosynthesis; terpenoid biosynthesis. Functionally, involved in the biosynthesis of phenolic monoterpenes natural products thymol and carvacrol which have a broad range of biological activities acting as antimicrobial compounds, insecticides, antioxidants and pharmaceutical agents. Monoterpene synthase which catalyzes the conversion of geranyl diphosphate (GPP) to gamma-terpinene and the minor products alpha-thujene, alpha-terpinene, myrcene, sabinene, (+)-R-limonene, alpha-pinene and alpha-phellandrene. In Origanum vulgare (Wild marjoram), this protein is Gamma-terpinene synthase, chloroplastic.